Here is a 530-residue protein sequence, read N- to C-terminus: Bifunctional purine biosynthesis protein PurH (530 aa).

The MGS-like domain maps to Met-1–Val-148.

This sequence belongs to the PurH family.

The enzyme catalyses (6R)-10-formyltetrahydrofolate + 5-amino-1-(5-phospho-beta-D-ribosyl)imidazole-4-carboxamide = 5-formamido-1-(5-phospho-D-ribosyl)imidazole-4-carboxamide + (6S)-5,6,7,8-tetrahydrofolate. It carries out the reaction IMP + H2O = 5-formamido-1-(5-phospho-D-ribosyl)imidazole-4-carboxamide. It participates in purine metabolism; IMP biosynthesis via de novo pathway; 5-formamido-1-(5-phospho-D-ribosyl)imidazole-4-carboxamide from 5-amino-1-(5-phospho-D-ribosyl)imidazole-4-carboxamide (10-formyl THF route): step 1/1. It functions in the pathway purine metabolism; IMP biosynthesis via de novo pathway; IMP from 5-formamido-1-(5-phospho-D-ribosyl)imidazole-4-carboxamide: step 1/1. The chain is Bifunctional purine biosynthesis protein PurH from Vibrio campbellii (strain ATCC BAA-1116).